The primary structure comprises 384 residues: Chaperone protein DnaJ (384 aa).

The region spanning 5 to 69 (DYYKVLGVDR…QKRAQYDQFG (65 aa)) is the J domain. Residues 141-223 (GKKTQVSYTR…CGGKGTVERK (83 aa)) form a CR-type zinc finger. Zn(2+) contacts are provided by cysteine 154, cysteine 157, cysteine 171, cysteine 174, cysteine 197, cysteine 200, cysteine 211, and cysteine 214. 4 CXXCXGXG motif repeats span residues 154–161 (CETCGGNG), 171–178 (CDKCHGTG), 197–204 (CDKCNGRG), and 211–218 (CKTCGGKG).

Belongs to the DnaJ family. As to quaternary structure, homodimer. Zn(2+) is required as a cofactor.

It localises to the cytoplasm. In terms of biological role, participates actively in the response to hyperosmotic and heat shock by preventing the aggregation of stress-denatured proteins and by disaggregating proteins, also in an autonomous, DnaK-independent fashion. Unfolded proteins bind initially to DnaJ; upon interaction with the DnaJ-bound protein, DnaK hydrolyzes its bound ATP, resulting in the formation of a stable complex. GrpE releases ADP from DnaK; ATP binding to DnaK triggers the release of the substrate protein, thus completing the reaction cycle. Several rounds of ATP-dependent interactions between DnaJ, DnaK and GrpE are required for fully efficient folding. Also involved, together with DnaK and GrpE, in the DNA replication of plasmids through activation of initiation proteins. The sequence is that of Chaperone protein DnaJ from Lactobacillus acidophilus (strain ATCC 700396 / NCK56 / N2 / NCFM).